We begin with the raw amino-acid sequence, 276 residues long: Extracellular metalloprotease VDBG_07883 (276 aa).

The signal sequence occupies residues 1-17 (MQSKFLWIAAASAATAA). N-linked (GlcNAc...) asparagine glycans are attached at residues Asn70 and Asn102. His191 is a binding site for Zn(2+). Glu192 is a catalytic residue. Residue His195 participates in Zn(2+) binding. Asn222 is a glycosylation site (N-linked (GlcNAc...) asparagine). Cys227 and Cys254 are joined by a disulfide.

Belongs to the peptidase M43B family.

The protein localises to the secreted. Secreted metalloproteinase that allows assimilation of proteinaceous substrates. The sequence is that of Extracellular metalloprotease VDBG_07883 from Verticillium alfalfae (strain VaMs.102 / ATCC MYA-4576 / FGSC 10136) (Verticillium wilt of alfalfa).